The sequence spans 57 residues: DNA-directed RNA polymerase subunit Rpo6 (57 aa).

It belongs to the archaeal Rpo6/eukaryotic RPB6 RNA polymerase subunit family. Part of the RNA polymerase complex.

The protein resides in the cytoplasm. The enzyme catalyses RNA(n) + a ribonucleoside 5'-triphosphate = RNA(n+1) + diphosphate. Functionally, DNA-dependent RNA polymerase (RNAP) catalyzes the transcription of DNA into RNA using the four ribonucleoside triphosphates as substrates. This Pyrococcus furiosus (strain ATCC 43587 / DSM 3638 / JCM 8422 / Vc1) protein is DNA-directed RNA polymerase subunit Rpo6.